Reading from the N-terminus, the 138-residue chain is Ribosome-binding factor A (138 aa).

It belongs to the RbfA family. As to quaternary structure, monomer. Binds 30S ribosomal subunits, but not 50S ribosomal subunits or 70S ribosomes.

The protein resides in the cytoplasm. One of several proteins that assist in the late maturation steps of the functional core of the 30S ribosomal subunit. Associates with free 30S ribosomal subunits (but not with 30S subunits that are part of 70S ribosomes or polysomes). Required for efficient processing of 16S rRNA. May interact with the 5'-terminal helix region of 16S rRNA. This chain is Ribosome-binding factor A, found in Pseudoalteromonas atlantica (strain T6c / ATCC BAA-1087).